Here is a 954-residue protein sequence, read N- to C-terminus: Glycine dehydrogenase (decarboxylating) (954 aa).

At Lys-702 the chain carries N6-(pyridoxal phosphate)lysine.

It belongs to the GcvP family. The glycine cleavage system is composed of four proteins: P, T, L and H. Pyridoxal 5'-phosphate serves as cofactor.

It carries out the reaction N(6)-[(R)-lipoyl]-L-lysyl-[glycine-cleavage complex H protein] + glycine + H(+) = N(6)-[(R)-S(8)-aminomethyldihydrolipoyl]-L-lysyl-[glycine-cleavage complex H protein] + CO2. Its function is as follows. The glycine cleavage system catalyzes the degradation of glycine. The P protein binds the alpha-amino group of glycine through its pyridoxal phosphate cofactor; CO(2) is released and the remaining methylamine moiety is then transferred to the lipoamide cofactor of the H protein. The chain is Glycine dehydrogenase (decarboxylating) from Xanthomonas euvesicatoria pv. vesicatoria (strain 85-10) (Xanthomonas campestris pv. vesicatoria).